We begin with the raw amino-acid sequence, 302 residues long: Late embryogenesis abundant protein D-29 (302 aa).

Disordered stretches follow at residues 25-93 (HMPS…AKEY), 168-193 (VKNA…LADS), and 205-302 (AKEK…NHKN). 2 stretches are compositionally biased toward basic and acidic residues: residues 34 to 70 (RDYS…HAAN) and 79 to 93 (AKDR…AKEY). A compositionally biased stretch (basic and acidic residues) spans 205 to 286 (AKEKVRDMAD…KAEETIESAK (82 aa)).

The protein belongs to the LEA type 1 family.

Its function is as follows. LEA protein are late embryonic proteins abundant in higher plant seed embryos. There are two subsets of LEA proteins (5a and 5b), the first ones are expressed when the cotyledon weight reach 80 mg and the second set are expressed above 100 mg. The function of those proteins is not known. The chain is Late embryogenesis abundant protein D-29 from Gossypium hirsutum (Upland cotton).